The primary structure comprises 73 residues: Waprin-Phi2 (73 aa).

The signal sequence occupies residues 1–21 (MKATLLLLLLFAVILPGTISA). The 51-residue stretch at 22–72 (EQEKPGSCPNVDMPIPPLGLCKTTCSKDSDCSETKKCCKNGCGFMTCTTAR) folds into the WAP domain. Disulfide bonds link C29-C59, C42-C63, C46-C58, and C52-C68.

It belongs to the venom waprin family. Expressed by the venom gland.

Its subcellular location is the secreted. Functionally, damages membranes of susceptible bacteria. Has no hemolytic activity. Not toxic to mice. Does not inhibit the proteinases elastase and cathepsin G. This is Waprin-Phi2 from Philodryas olfersii (Green snake).